The following is a 95-amino-acid chain: Integration host factor subunit beta (95 aa).

The protein belongs to the bacterial histone-like protein family. In terms of assembly, heterodimer of an alpha and a beta chain.

This protein is one of the two subunits of integration host factor, a specific DNA-binding protein that functions in genetic recombination as well as in transcriptional and translational control. The sequence is that of Integration host factor subunit beta from Shewanella sp. (strain ANA-3).